Reading from the N-terminus, the 418-residue chain is UDP-N-acetylglucosamine 1-carboxyvinyltransferase (418 aa).

K22 to N23 provides a ligand contact to phosphoenolpyruvate. A UDP-N-acetyl-alpha-D-glucosamine-binding site is contributed by R93. C117 serves as the catalytic Proton donor. C117 is modified (2-(S-cysteinyl)pyruvic acid O-phosphothioketal). UDP-N-acetyl-alpha-D-glucosamine-binding positions include R122 to L126, D306, and L328.

It belongs to the EPSP synthase family. MurA subfamily.

The protein resides in the cytoplasm. The enzyme catalyses phosphoenolpyruvate + UDP-N-acetyl-alpha-D-glucosamine = UDP-N-acetyl-3-O-(1-carboxyvinyl)-alpha-D-glucosamine + phosphate. It participates in cell wall biogenesis; peptidoglycan biosynthesis. Functionally, cell wall formation. Adds enolpyruvyl to UDP-N-acetylglucosamine. The protein is UDP-N-acetylglucosamine 1-carboxyvinyltransferase of Campylobacter hominis (strain ATCC BAA-381 / DSM 21671 / CCUG 45161 / LMG 19568 / NCTC 13146 / CH001A).